The chain runs to 769 residues: Polyribonucleotide nucleotidyltransferase (769 aa).

Mg(2+)-binding residues include D490 and D496. A KH domain is found at 557 to 616; that stretch reads PKIDTIMIPVDKIKVVIGKGGEQIDKIIAETGVKIDIDDEGLCSIFSSDQSAIDRAKEII. In terms of domain architecture, S1 motif spans 626 to 694; sequence GEVYEAKVVR…DKGRVDASMR (69 aa). Residues 700 to 734 show a composition bias toward basic and acidic residues; it reads PEGYVEPERKPRERRDNKDRRNGNGFDRRNNDRNN. The disordered stretch occupies residues 700-769; it reads PEGYVEPERK…FPELSTKKPE (70 aa). The segment covering 736-746 has biased composition (low complexity); it reads NNHNNNSGNHS. Residues 747–769 show a composition bias toward basic and acidic residues; the sequence is FELRERKSHVDHEFPELSTKKPE.

Belongs to the polyribonucleotide nucleotidyltransferase family. It depends on Mg(2+) as a cofactor.

Its subcellular location is the cytoplasm. The catalysed reaction is RNA(n+1) + phosphate = RNA(n) + a ribonucleoside 5'-diphosphate. Its function is as follows. Involved in mRNA degradation. Catalyzes the phosphorolysis of single-stranded polyribonucleotides processively in the 3'- to 5'-direction. In Lactococcus lactis subsp. cremoris (strain SK11), this protein is Polyribonucleotide nucleotidyltransferase.